Consider the following 49-residue polypeptide: Venom peptide 3 (49 aa).

Positions 1-23 are cleaved as a signal peptide; the sequence is MRFTFVLVIAATVAVLGFFGINA. AXPX repeat units lie at residues 23–26 and 31–34; these read AEPM and AEPY. Residues 24-37 constitute a propeptide that is removed on maturation; sequence EPMPDPHAEPYPDA. Leucine amide is present on leucine 48.

Expressed by the venom gland.

Its subcellular location is the secreted. The polypeptide is Venom peptide 3 (Eumenes pomiformis (Potter wasp)).